The chain runs to 100 residues: Protein translation factor SUI1 homolog (100 aa).

Belongs to the SUI1 family.

In Sulfurisphaera tokodaii (strain DSM 16993 / JCM 10545 / NBRC 100140 / 7) (Sulfolobus tokodaii), this protein is Protein translation factor SUI1 homolog.